A 572-amino-acid chain; its full sequence is MANAPHGGVLKDLLARDAPRQAELAAEAESLPAVTLTERQLCDLELIMNGGFSPLEGFMNQADYDRVCEDNRLADGNVFSMPITLDASQEVIDEKKLQAASRITLRDFRDDRNLAILTIDDIYRPDKTKEAKLVFGGDPEHPAIVYLNNTVKEFYIGGKIEAVNKLNHYDYVALRYTPAELRVHFDKLGWSRVVAFQTRNPMHRAHRELTVRAARSRQANVLIHPVVGLTKPGDIDHFTRVRAYQALLPRYPNGMAVLGLLGLAMRMGGPREAIWHAIIRKNHGATHFIVGRDHAGPGSNSKGEDFYGPYDAQHAVEKYKDELGIEVVEFQMVTYLPDTDEYRPVDQVPAGVKTLNISGTELRRRLRSAHIPEWFSYPEVVKILRESNPPRATQGFTIFLTGYMNSGKDAIARALQVTLNQQGGRSVSLLLGDTVRHELSSELGFTREDRHTNIQRIAFVATELTRAGAAVIAAPIAPYEESRKFARDAVSQAGSFFLVHVATPLEHCEQSDKRGIYAAARRGEIKGFTGVDDPYETPEKADLVVDFSKQSVRSIVHEIILVLESQGFLERQ.

Residues 1–169 (MANAPHGGVL…IEAVNKLNHY (169 aa)) form an N-terminal region. The segment at 170–393 (DYVALRYTPA…LRESNPPRAT (224 aa)) is catalytic. A sulfate-binding site is contributed by Q197. Residues 197–200 (QTRN) and 291–294 (GRDH) each bind ATP. Active-site residues include T198, R199, and N200. A sulfate-binding site is contributed by R199. Position 295 (A295) interacts with sulfate. ATP is bound at residue V333. The allosteric regulation domain; adenylyl-sulfate kinase-like stretch occupies residues 394-572 (QGFTIFLTGY…LESQGFLERQ (179 aa)). 3'-phosphoadenylyl sulfate-binding positions include 433 to 436 (DTVR), R450, 476 to 477 (IA), and R514.

This sequence in the N-terminal section; belongs to the sulfate adenylyltransferase family. In the C-terminal section; belongs to the APS kinase family. In terms of assembly, homohexamer. Dimer of trimers.

It is found in the cytoplasm. It carries out the reaction sulfate + ATP + H(+) = adenosine 5'-phosphosulfate + diphosphate. It participates in sulfur metabolism; hydrogen sulfide biosynthesis; sulfite from sulfate: step 1/3. Its activity is regulated as follows. Allosterically inhibited by 3'-phosphoadenosine 5'-phosphosulfate (PAPS). In terms of biological role, catalyzes the first intracellular reaction of sulfate assimilation, forming adenosine-5'-phosphosulfate (APS) from inorganic sulfate and ATP. Plays an important role in sulfate activation as a component of the biosynthesis pathway of sulfur-containing amino acids. This is Sulfate adenylyltransferase from Penicillium chrysogenum (Penicillium notatum).